The following is a 122-amino-acid chain: Large ribosomal subunit protein uL14c (122 aa).

The protein belongs to the universal ribosomal protein uL14 family. In terms of assembly, part of the 50S ribosomal subunit.

Its subcellular location is the plastid. The protein localises to the chloroplast. Binds to 23S rRNA. In Psilotum nudum (Whisk fern), this protein is Large ribosomal subunit protein uL14c.